A 103-amino-acid chain; its full sequence is Co-chaperonin GroES (103 aa).

It belongs to the GroES chaperonin family. As to quaternary structure, heptamer of 7 subunits arranged in a ring. Interacts with the chaperonin GroEL.

Its subcellular location is the cytoplasm. Its function is as follows. Together with the chaperonin GroEL, plays an essential role in assisting protein folding. The GroEL-GroES system forms a nano-cage that allows encapsulation of the non-native substrate proteins and provides a physical environment optimized to promote and accelerate protein folding. GroES binds to the apical surface of the GroEL ring, thereby capping the opening of the GroEL channel. In Microcystis aeruginosa (strain NIES-843 / IAM M-2473), this protein is Co-chaperonin GroES.